The chain runs to 365 residues: Elongation factor Tu (365 aa).

GTP contacts are provided by residues 1 to 7 (HVDHGKT), 62 to 66 (DCPGH), and 117 to 120 (NKCD). The tr-type G domain occupies 1–185 (HVDHGKTTLT…ILDTYIPEPK (185 aa)). T7 lines the Mg(2+) pocket.

It belongs to the TRAFAC class translation factor GTPase superfamily. Classic translation factor GTPase family. EF-Tu/EF-1A subfamily. Monomer.

The protein resides in the cytoplasm. The enzyme catalyses GTP + H2O = GDP + phosphate + H(+). In terms of biological role, GTP hydrolase that promotes the GTP-dependent binding of aminoacyl-tRNA to the A-site of ribosomes during protein biosynthesis. The chain is Elongation factor Tu from Buchnera aphidicola subsp. Melaphis rhois.